Consider the following 241-residue polypeptide: Venom nerve growth factor (241 aa).

The signal sequence occupies residues methionine 1–alanine 18. A propeptide spanning residues alanine 19–arginine 122 is cleaved from the precursor. Intrachain disulfides connect cysteine 136-cysteine 201, cysteine 179-cysteine 229, and cysteine 189-cysteine 231. The N-linked (GlcNAc...) asparagine glycan is linked to asparagine 145.

Belongs to the NGF-beta family. In terms of assembly, homodimer; non-covalently linked. As to expression, expressed by the venom gland.

The protein resides in the secreted. Its function is as follows. Nerve growth factor is important for the development and maintenance of the sympathetic and sensory nervous systems. It stimulates division and differentiation of sympathetic and embryonic sensory neurons as well as basal forebrain cholinergic neurons in the brain. Its relevance in the snake venom is not clear. However, it has been shown to inhibit metalloproteinase-dependent proteolysis of platelet glycoprotein Ib alpha, suggesting a metalloproteinase inhibition to prevent metalloprotease autodigestion and/or protection against prey proteases. Binds a lipid between the two protein chains in the homodimer. The lipid-bound form promotes histamine relase from mouse mast cells, contrary to the lipid-free form. In Crotalus durissus terrificus (South American rattlesnake), this protein is Venom nerve growth factor.